A 450-amino-acid chain; its full sequence is Glucose-6-phosphate isomerase (450 aa).

The active-site Proton donor is the Glu-290. Residues His-311 and Lys-425 contribute to the active site.

The protein belongs to the GPI family.

It is found in the cytoplasm. The catalysed reaction is alpha-D-glucose 6-phosphate = beta-D-fructose 6-phosphate. Its pathway is carbohydrate biosynthesis; gluconeogenesis. The protein operates within carbohydrate degradation; glycolysis; D-glyceraldehyde 3-phosphate and glycerone phosphate from D-glucose: step 2/4. Its function is as follows. Catalyzes the reversible isomerization of glucose-6-phosphate to fructose-6-phosphate. This chain is Glucose-6-phosphate isomerase, found in Limosilactobacillus fermentum (Lactobacillus fermentum).